We begin with the raw amino-acid sequence, 324 residues long: DGAT1/2-independent enzyme synthesizing storage lipids (324 aa).

The Lumenal segment spans residues 1 to 50 (MIDKNQTCGVGQDSVPYMICLIHILEEWFGVEQLEDYLNFANYLLWVFTP). Residue asparagine 5 is glycosylated (N-linked (GlcNAc...) asparagine). The chain crosses the membrane as a helical span at residues 51–71 (LILLILPYFTIFLLYLTIIFL). Residues 72 to 125 (HIYKRKNVLKEAYSHNLWDGARKTVATLWDGHAAVWHGYEVHGMEKIPEDGPAL) are Cytoplasmic-facing. Residues 126 to 146 (IIFYHGAIPIDFYYFMAKIFI) form a helical membrane-spanning segment. The active site involves histidine 130. The Lumenal portion of the chain corresponds to 147–324 (HKGRTCRVVA…IMSALLERFH (178 aa)).

The protein belongs to the diacylglycerol acyltransferase family. Highly divergent.

It localises to the endoplasmic reticulum membrane. It carries out the reaction a 1,2-diacylglycerol + a 1,2-diacyl-sn-glycero-3-phosphocholine = a triacylglycerol + a 1-acyl-sn-glycero-3-phosphocholine. It catalyses the reaction a 1-O-alkyl-2-acyl-sn-glycero-3-phosphocholine + a 1,2-diacylglycerol = a 1-O-alkyl-sn-glycero-3-phosphocholine + a triacylglycerol. The enzyme catalyses a 2-acylglycerol + an acyl-CoA = a 1,2-diacylglycerol + CoA. The catalysed reaction is an acyl-CoA + a 1,2-diacyl-sn-glycerol = a triacyl-sn-glycerol + CoA. It carries out the reaction 2-(9Z-octadecenoyl)-glycerol + (9Z)-octadecenoyl-CoA = 1,2-di-(9Z-octadecenoyl)-glycerol + CoA. It catalyses the reaction 1,2-di-(9Z-octadecenoyl)-sn-glycerol + (9Z)-octadecenoyl-CoA = 1,2,3-tri-(9Z-octadecenoyl)-glycerol + CoA. With respect to regulation, acyltransferase activity is specifically inhibited by TMX1 at the endoplasmic reticulum, restricting accumulation of triacylglycerol. Functionally, catalytic subunit of the alternative triglyceride biosynthesis pathway, which mediates formation of triacylglycerol from diacylglycerol and membrane phospholipids. Synthesizes triacylglycerol at the expense of membrane phospholipids, such as phosphatidylcholine (PC) and its ether-linked form (ePC), thereby altering the composition of membranes. The alternative triglyceride biosynthesis pathway is probably required to provide the energy required for rapid growth when fuel sources are limiting. It maintains mitochondrial function during periods of extracellular lipid starvation. Can also use acyl-CoA as donor: acts as a acyl-CoA:monoacylglycerol acyltransferase (MGAT), but also shows acyl-CoA:diacylglycerol acyltransferase (DGAT) activity. The protein is DGAT1/2-independent enzyme synthesizing storage lipids of Homo sapiens (Human).